The primary structure comprises 288 residues: ATP synthase gamma chain (288 aa).

Belongs to the ATPase gamma chain family. In terms of assembly, F-type ATPases have 2 components, CF(1) - the catalytic core - and CF(0) - the membrane proton channel. CF(1) has five subunits: alpha(3), beta(3), gamma(1), delta(1), epsilon(1). CF(0) has three main subunits: a, b and c.

It localises to the cell inner membrane. Its function is as follows. Produces ATP from ADP in the presence of a proton gradient across the membrane. The gamma chain is believed to be important in regulating ATPase activity and the flow of protons through the CF(0) complex. This is ATP synthase gamma chain from Stutzerimonas stutzeri (strain A1501) (Pseudomonas stutzeri).